The following is a 346-amino-acid chain: Tetraacyldisaccharide 4'-kinase (346 aa).

Residue 54 to 61 (TVGGAGKT) participates in ATP binding.

The protein belongs to the LpxK family.

It carries out the reaction a lipid A disaccharide + ATP = a lipid IVA + ADP + H(+). The protein operates within glycolipid biosynthesis; lipid IV(A) biosynthesis; lipid IV(A) from (3R)-3-hydroxytetradecanoyl-[acyl-carrier-protein] and UDP-N-acetyl-alpha-D-glucosamine: step 6/6. Functionally, transfers the gamma-phosphate of ATP to the 4'-position of a tetraacyldisaccharide 1-phosphate intermediate (termed DS-1-P) to form tetraacyldisaccharide 1,4'-bis-phosphate (lipid IVA). This is Tetraacyldisaccharide 4'-kinase from Sinorhizobium medicae (strain WSM419) (Ensifer medicae).